We begin with the raw amino-acid sequence, 669 residues long: tRNA 5-methylaminomethyl-2-thiouridine biosynthesis bifunctional protein MnmC (669 aa).

The interval 1-246 (MIKNANIHFN…KRSMLIGTLK (246 aa)) is tRNA (mnm(5)s(2)U34)-methyltransferase. Positions 271 to 669 (IGGGIASSCI…IVRDLIRNKI (399 aa)) are FAD-dependent cmnm(5)s(2)U34 oxidoreductase.

This sequence in the N-terminal section; belongs to the methyltransferase superfamily. tRNA (mnm(5)s(2)U34)-methyltransferase family. In the C-terminal section; belongs to the DAO family. Requires FAD as cofactor.

It is found in the cytoplasm. The catalysed reaction is 5-aminomethyl-2-thiouridine(34) in tRNA + S-adenosyl-L-methionine = 5-methylaminomethyl-2-thiouridine(34) in tRNA + S-adenosyl-L-homocysteine + H(+). Catalyzes the last two steps in the biosynthesis of 5-methylaminomethyl-2-thiouridine (mnm(5)s(2)U) at the wobble position (U34) in tRNA. Catalyzes the FAD-dependent demodification of cmnm(5)s(2)U34 to nm(5)s(2)U34, followed by the transfer of a methyl group from S-adenosyl-L-methionine to nm(5)s(2)U34, to form mnm(5)s(2)U34. The chain is tRNA 5-methylaminomethyl-2-thiouridine biosynthesis bifunctional protein MnmC from Pseudoalteromonas translucida (strain TAC 125).